We begin with the raw amino-acid sequence, 338 residues long: MEMO1 family protein MHO1 (338 aa).

The protein belongs to the MEMO1 family.

It is found in the cytoplasm. The protein resides in the nucleus. Functionally, plays a role in haploid invasive growth under conditions of nutrient insufficiency, suggesting that the function of the MEMO1 family in cell motility/invasion is conserved across species. This Saccharomyces cerevisiae (strain ATCC 204508 / S288c) (Baker's yeast) protein is MEMO1 family protein MHO1.